The following is a 709-amino-acid chain: Alpha-1,2-mannosyltransferase MNN24 (709 aa).

Residues 1–9 (MFSIPVSSK) lie on the Cytoplasmic side of the membrane. A helical membrane pass occupies residues 10-30 (TVRLILVSLLLITLINILAAF). The Extracellular segment spans residues 31-709 (QRSTLSSWFP…KNHIEFLEIS (679 aa)). The N-linked (GlcNAc...) asparagine glycan is linked to asparagine 317.

It belongs to the MNN1/MNT family.

Its subcellular location is the golgi apparatus membrane. It participates in protein modification; protein glycosylation. Alpha-1,2-mannosyltransferase required for cell wall integrity. Responsible for addition of the first alpha-1,2-linked mannose to form the branches on the mannan backbone of oligosaccharides. Addition of alpha-1,2-mannose is required for stabilization of the alpha-1,6-mannose backbone and hence regulates mannan fibril length; and is important for both immune recognition and virulence. The protein is Alpha-1,2-mannosyltransferase MNN24 (MNN24) of Candida albicans (strain SC5314 / ATCC MYA-2876) (Yeast).